The primary structure comprises 323 residues: Ribosomal protein L11 methyltransferase (323 aa).

Residues Thr160, Gly184, Asp206, and Asn257 each contribute to the S-adenosyl-L-methionine site.

It belongs to the methyltransferase superfamily. PrmA family.

It is found in the cytoplasm. The catalysed reaction is L-lysyl-[protein] + 3 S-adenosyl-L-methionine = N(6),N(6),N(6)-trimethyl-L-lysyl-[protein] + 3 S-adenosyl-L-homocysteine + 3 H(+). Functionally, methylates ribosomal protein L11. This is Ribosomal protein L11 methyltransferase from Agathobacter rectalis (strain ATCC 33656 / DSM 3377 / JCM 17463 / KCTC 5835 / VPI 0990) (Eubacterium rectale).